The following is a 230-amino-acid chain: Protein-L-isoaspartate O-methyltransferase (230 aa).

Residue S65 is part of the active site.

This sequence belongs to the methyltransferase superfamily. L-isoaspartyl/D-aspartyl protein methyltransferase family. As to quaternary structure, monomer. In terms of tissue distribution, highest contents in seeds.

It is found in the cytoplasm. It carries out the reaction [protein]-L-isoaspartate + S-adenosyl-L-methionine = [protein]-L-isoaspartate alpha-methyl ester + S-adenosyl-L-homocysteine. Catalyzes the methyl esterification of L-isoaspartyl residues in peptides and proteins that result from spontaneous decomposition of normal L-aspartyl and L-asparaginyl residues. It plays a role in the repair and/or degradation of damaged proteins. This enzyme does not act on D-aspartyl residues. The polypeptide is Protein-L-isoaspartate O-methyltransferase (PCM) (Triticum aestivum (Wheat)).